The sequence spans 423 residues: Adenylosuccinate synthetase (423 aa).

Residues 12 to 18 and 40 to 42 contribute to the GTP site; these read GDEGKGK and GHT. The Proton acceptor role is filled by Asp13. Mg(2+) is bound by residues Asp13 and Gly40. IMP is bound by residues 13 to 16, 38 to 41, Thr129, Arg143, Gln224, Thr239, and Arg303; these read DEGK and NAGH. The Proton donor role is filled by His41. 299-305 contacts substrate; sequence SVTGRQR. Residues Arg305, 331-333, and 412-414 contribute to the GTP site; these read KGD and SVG.

This sequence belongs to the adenylosuccinate synthetase family. Homodimer. Mg(2+) is required as a cofactor.

It is found in the cytoplasm. It catalyses the reaction IMP + L-aspartate + GTP = N(6)-(1,2-dicarboxyethyl)-AMP + GDP + phosphate + 2 H(+). Its pathway is purine metabolism; AMP biosynthesis via de novo pathway; AMP from IMP: step 1/2. Its function is as follows. Plays an important role in the de novo pathway of purine nucleotide biosynthesis. Catalyzes the first committed step in the biosynthesis of AMP from IMP. This is Adenylosuccinate synthetase from Flavobacterium psychrophilum (strain ATCC 49511 / DSM 21280 / CIP 103535 / JIP02/86).